The primary structure comprises 309 residues: Homoserine kinase (309 aa).

An ATP-binding site is contributed by 95–105; sequence PQSRGLGSSAA.

The protein belongs to the GHMP kinase family. Homoserine kinase subfamily.

The protein localises to the cytoplasm. The enzyme catalyses L-homoserine + ATP = O-phospho-L-homoserine + ADP + H(+). Its pathway is amino-acid biosynthesis; L-threonine biosynthesis; L-threonine from L-aspartate: step 4/5. Its function is as follows. Catalyzes the ATP-dependent phosphorylation of L-homoserine to L-homoserine phosphate. The protein is Homoserine kinase of Corynebacterium efficiens (strain DSM 44549 / YS-314 / AJ 12310 / JCM 11189 / NBRC 100395).